A 626-amino-acid chain; its full sequence is MHKEQDKKRLATLTLAALGVVYGDIGTSPLYSIKEVFGGAHHPVPITPDNVLGILSLFFWSLIIVVTLKYVSFIMRANNRGEGGIIALMTLAMHKGVAGSWQQKMLVLLGLFGAALFYGDGIITPAISVLSAVEGLEILTPAFKPYILPITLITLIGLFIFQRRGTASVGALFGPVMVIWFAVIAVLGAAAIVENPAVLAAVNPVHAFHFLTGNSLLGFFALGAVVLCITGGEALYADMGHFGAKPIQYAWLGYVLPALLLNYFGQGALLLADPSSVENPFYLLAPEWGRYPLVALATVATVIASQAVISGAFSITQQAIQLGYTPRLEIQHTSDEEIGQIYLPAINWMMLIAIIALVIEFGSSSNLAAAYGIAVTGTMLITNILAIAVAVRLWNWSPARAMLGALPFICIDLGFFLANSVKIADGGWFPLAFGLAVFILLTTWKRGRELLGLRLAADAMQLKSFVVDIAGSGIGRVPGTAIFMTPDPELVPHAMLHSLKHYKALHEQVVVMSVKVFDVPYVPDVDRVEVHRLSNNFSQVVVQYGFKDDPDIPAALALCGEAGLAIEPMDTSFFLGRETLIPKLGSEMAYWRELLFVAMFRNAGSATAFFKIPSNRVVELGSQVVL.

12 consecutive transmembrane segments (helical) span residues 10-30 (LATLTLAALGVVYGDIGTSPL), 51-71 (VLGILSLFFWSLIIVVTLKYV), 107-127 (VLLGLFGAALFYGDGIITPAI), 141-161 (PAFKPYILPITLITLIGLFIF), 173-193 (FGPVMVIWFAVIAVLGAAAIV), 216-236 (LLGFFALGAVVLCITGGEALY), 251-271 (WLGYVLPALLLNYFGQGALLL), 293-313 (LVALATVATVIASQAVISGAF), 341-361 (IYLPAINWMMLIAIIALVIEF), 371-391 (YGIAVTGTMLITNILAIAVAV), 401-421 (AMLGALPFICIDLGFFLANSV), and 423-443 (IADGGWFPLAFGLAVFILLTT).

This sequence belongs to the HAK/KUP transporter (TC 2.A.72) family.

It is found in the cell inner membrane. It carries out the reaction K(+)(in) + H(+)(in) = K(+)(out) + H(+)(out). In terms of biological role, transport of potassium into the cell. Likely operates as a K(+):H(+) symporter. The protein is Probable potassium transport system protein Kup 3 of Dechloromonas aromatica (strain RCB).